Consider the following 141-residue polypeptide: ATP synthase epsilon chain (141 aa).

This sequence belongs to the ATPase epsilon chain family. F-type ATPases have 2 components, CF(1) - the catalytic core - and CF(0) - the membrane proton channel. CF(1) has five subunits: alpha(3), beta(3), gamma(1), delta(1), epsilon(1). CF(0) has three main subunits: a, b and c.

It localises to the cell inner membrane. Functionally, produces ATP from ADP in the presence of a proton gradient across the membrane. This is ATP synthase epsilon chain from Bordetella petrii (strain ATCC BAA-461 / DSM 12804 / CCUG 43448).